We begin with the raw amino-acid sequence, 479 residues long: Serine protease HTRA1A (479 aa).

The N-terminal stretch at Met1–Ala18 is a signal peptide. One can recognise an IGFBP N-terminal domain in the interval Val27–Lys111. 6 disulfides stabilise this stretch: Cys31-Cys56, Cys35-Cys58, Cys40-Cys59, Cys47-Cys62, Cys70-Cys87, and Cys81-Cys108. The region spanning Ser96 to Thr155 is the Kazal-like domain. The tract at residues Gly203 to Leu363 is serine protease. Residues His219, Asp249, and Ser327 each act as charge relay system in the active site. Positions Ala364–Glu466 constitute a PDZ domain.

The protein belongs to the peptidase S1C family. In terms of assembly, forms homotrimers. In the presence of substrate, may form higher-order multimers in a PDZ-independent manner.

The protein localises to the secreted. It localises to the cytoplasm. The protein resides in the cytosol. Its function is as follows. Serine protease with a variety of targets, including extracellular matrix proteins and proteoglycans. Through cleavage of proteoglycans, may release soluble FGF-glycosaminoglycan complexes that promote the range and intensity of FGF signals in the extracellular space. Regulates the availability of insulin-like growth factors (IGFs) by cleaving IGF-binding proteins. Inhibits signaling mediated by TGF-beta family members. Consequently, may regulate many physiological processes. Intracellularly, degrades TSC2, leading to the activation of TSC2 downstream targets. The polypeptide is Serine protease HTRA1A (htra1a) (Danio rerio (Zebrafish)).